A 172-amino-acid chain; its full sequence is MLDAFTKVVSQADTRGAYISDAEIDALKTMVAAGSKRMDVVNRITGNASTIVANAARALFEEQPQLIAPGGNAYTNRRMAACLRDMEIILRYVTYAVFAGDASVLDDRCLNGLRETYQALGVPGASVSTGVQKMKEAAIAIANDPSGVTRGDCSSLMSELGSYFDRAAAAVG.

An N4-methylasparagine modification is found at N72. (2R,3E)-phycocyanobilin contacts are provided by C82 and C153.

Belongs to the phycobiliprotein family. As to quaternary structure, heterodimer of an alpha and a beta subunit, which further assembles into trimers and the trimers into hexamers. Post-translationally, contains two covalently linked bilin chromophores.

The protein resides in the cellular thylakoid membrane. Its function is as follows. Light-harvesting photosynthetic bile pigment-protein from the phycobiliprotein complex (phycobilisome, PBS). Phycocyanin is the major phycobiliprotein in the PBS rod. The chain is C-phycocyanin-2 beta subunit (cpcB2) from Microchaete diplosiphon (Fremyella diplosiphon).